The sequence spans 157 residues: Protein TIFY 8 (157 aa).

One can recognise a Tify domain in the interval valine 33–leucine 68. The tract at residues serine 126 to serine 147 is disordered. Basic residues predominate over residues serine 137–serine 147.

It belongs to the TIFY/JAZ family. Post-translationally, ubiquitinated. Targeted for degradation by the SCF(COI1) E3 ubiquitin ligase-proteasome pathway during jasmonate signaling.

Repressor of jasmonate responses. The polypeptide is Protein TIFY 8 (Oryza sativa subsp. japonica (Rice)).